A 258-amino-acid chain; its full sequence is SufE-like protein 2, chloroplastic (258 aa).

The interval 1–32 (MNTSSSFKALASPPLISTSRPTTKSFPNPRFT) is disordered. The span at 15–32 (LISTSRPTTKSFPNPRFT) shows a compositional bias: polar residues. Residue cysteine 122 is the Cysteine persulfide intermediate of the active site.

It belongs to the SufE family. As to expression, highly expressed in flowers and pollen, and at low levels in roots, leaves and stems.

Its subcellular location is the plastid. It localises to the chloroplast. It participates in cofactor biosynthesis; iron-sulfur cluster biosynthesis. Functionally, participates in cysteine desulfurization mediated by NFS2. Can activate the cysteine desulfurase activity of NFS2 in vitro. Cysteine desulfurization mobilizes sulfur from L-cysteine to yield L-alanine and supplies the inorganic sulfur for iron-sulfur (Fe-S) cluster formation. The sequence is that of SufE-like protein 2, chloroplastic (SUFE2) from Arabidopsis thaliana (Mouse-ear cress).